Here is a 473-residue protein sequence, read N- to C-terminus: Crt homolog 1 (473 aa).

Over 1–49 (MTNNDKEKQPLLSSINNEDDNGATINIVEPVPWYSNIPQKIKNSMSKET) the chain is Cytoplasmic. Residues 50–70 (ITILIYVVLYVTSGVINSVLL) traverse the membrane as a helical segment. Over 71–80 (KKVMNKFTNY) the chain is Vacuolar. Residues 81–101 (AFFLSQLTNFGYVPIFGAVTA) traverse the membrane as a helical segment. Residues 102-121 (YKIFFTKDIPQETRDFPTRK) are Cytoplasmic-facing. Residues 122 to 142 (FAIMGALDAITGFFVVIGGVS) form a helical membrane-spanning segment. Topologically, residues 143–146 (TSGP) are vacuolar. The helical transmembrane segment at 147-167 (LQQLLNQAIIPFTMIASFIFL) threads the bilayer. Topologically, residues 168–175 (KERYSLIQ) are cytoplasmic. Residues 176–196 (LGGALVIIGGVVTSLIPSLLG) form a helical membrane-spanning segment. The Vacuolar segment spans residues 197 to 207 (GSSGGNKPFWN). Residues 208–228 (FFYLLSVIPGALSNVYKDIGF) traverse the membrane as a helical segment. Residues 229–248 (QAVADMDVWYLQYWDSLYQS) lie on the Cytoplasmic side of the membrane. Residues 249–269 (IFGLFLFPVNNWLPPPATVKF) traverse the membrane as a helical segment. Over 270-322 (EQILPFMKEGAECLAGINSIIPSYINGTSSFTATSCTYAPDATITCDDCHNAW) the chain is Vacuolar. The N-linked (GlcNAc...) asparagine glycan is linked to N295. A helical transmembrane segment spans residues 323-343 (IVIILYMTINIIYNIFILLVL). Topologically, residues 344–352 (KHAGATVYS) are cytoplasmic. A helical membrane pass occupies residues 353–373 (IANTLRLPLTNIVFSIHFIMG). Residue S374 is a topological domain, vacuolar. The chain crosses the membrane as a helical span at residues 375–395 (AVSPFSGLSVAGLVIILVGLG). Residues 396–473 (GYRVGSMIKQ…AANNNNYGDA (78 aa)) are Cytoplasmic-facing.

This sequence belongs to the CRT-like transporter family.

The protein resides in the vacuole membrane. Functionally, nutrient transporter. Involved in maintaining the osmotic homeostasis of the digestive vacuole. This Dictyostelium discoideum (Social amoeba) protein is Crt homolog 1 (crtp1).